The following is a 562-amino-acid chain: Probable malate:quinone oxidoreductase (562 aa).

The tract at residues E530–L562 is disordered. The span at T551–L562 shows a compositional bias: polar residues.

The protein belongs to the MQO family. It depends on FAD as a cofactor.

The enzyme catalyses (S)-malate + a quinone = a quinol + oxaloacetate. Its pathway is carbohydrate metabolism; tricarboxylic acid cycle; oxaloacetate from (S)-malate (quinone route): step 1/1. This chain is Probable malate:quinone oxidoreductase, found in Xylella fastidiosa (strain M12).